The chain runs to 452 residues: Glycine receptor subunit alpha-2 (452 aa).

An N-terminal signal peptide occupies residues 1–27; it reads MNRQLVNILTALFAFFLGTNHFREAFC. Topologically, residues 28–256 are extracellular; the sequence is KDHDSRSGKH…KFHLERQMGY (229 aa). Asn-72 carries an N-linked (GlcNAc...) asparagine glycan. Arg-99 contacts glycine. Residue Arg-99 participates in strychnine binding. Asn-103 carries N-linked (GlcNAc...) asparagine glycosylation. Ser-163 contacts glycine. Residues Cys-172 and Cys-186 are joined by a disulfide bond. Zn(2+) is bound by residues Glu-226 and Glu-228. Cys-232 and Cys-243 form a disulfide bridge. Thr-238 contacts glycine. Position 249 (His-249) interacts with Zn(2+). Residues 257 to 278 form a helical membrane-spanning segment; it reads YLIQMYIPSLLIVILSWVSFWI. At 279–283 the chain is on the cytoplasmic side; that stretch reads NMDAA. A helical membrane pass occupies residues 284–304; that stretch reads PARVALGITTVLTMTTQSSGS. Residues 305–315 are Extracellular-facing; sequence RASLPKVSYVK. Residues 316–336 form a helical membrane-spanning segment; that stretch reads AIDIWMAVCLLFVFAALLEYA. Residues 337–420 are Cytoplasmic-facing; that stretch reads AVNFVSRQHK…FVDRAKRIDT (84 aa). Residues 421–441 form a helical membrane-spanning segment; the sequence is ISRAAFPLAFLIFNIFYWITY. The Extracellular segment spans residues 442 to 452; sequence KIIRHEDVHKK.

This sequence belongs to the ligand-gated ion channel (TC 1.A.9) family. Glycine receptor (TC 1.A.9.3) subfamily. GLRA2 sub-subfamily. As to quaternary structure, interacts with GLRB. Heteropentamer composed of GLRA2 and GLRB; functional GLRB-GLRA2 heteropentamers contain four GLRA2 subunits and one GLRB subunit, although alternative subunit composition cannot be excluded. Homopentamer (in vitro). Both homopentamers and heteropentamers form functional ion channels, but their characteristics are subtly different.

The protein localises to the postsynaptic cell membrane. It is found in the synapse. It localises to the cell membrane. The protein resides in the cell projection. It carries out the reaction chloride(in) = chloride(out). With respect to regulation, channel opening is triggered by extracellular glycine. Channel opening is also triggered by taurine and beta-alanine. Inhibited by strychnine. Inhibited by picrotoxin. Functionally, subunit of heteromeric glycine-gated chloride channels. Plays a role in synaptic plasticity. Contributes to the generation of inhibitory postsynaptic currents, and is involved in the down-regulation of neuronal excitability. Plays a role in cellular responses to ethanol. The sequence is that of Glycine receptor subunit alpha-2 from Rattus norvegicus (Rat).